The primary structure comprises 74 residues: uncharacterized protein (74 aa).

This is an uncharacterized protein from Acidianus hospitalis (AFV-1).